Reading from the N-terminus, the 120-residue chain is Chaperonin GroEL (120 aa).

23–27 (DGTTT) provides a ligand contact to ATP.

Belongs to the chaperonin (HSP60) family. Forms a cylinder of 14 subunits composed of two heptameric rings stacked back-to-back. Interacts with the co-chaperonin GroES.

It localises to the cytoplasm. The catalysed reaction is ATP + H2O + a folded polypeptide = ADP + phosphate + an unfolded polypeptide.. Its function is as follows. Together with its co-chaperonin GroES, plays an essential role in assisting protein folding. The GroEL-GroES system forms a nano-cage that allows encapsulation of the non-native substrate proteins and provides a physical environment optimized to promote and accelerate protein folding. The polypeptide is Chaperonin GroEL (Mycobacterium scrofulaceum).